We begin with the raw amino-acid sequence, 535 residues long: Inositol 1,4,5-trisphosphate receptor-interacting protein-like 2 (535 aa).

The N-terminal stretch at 1-38 (MSVHYTLNLRVFWPLVTGLCTALVCLYHVLRGSGGARA) is a signal peptide. Residues 39–43 (EPADG) lie on the Extracellular side of the membrane. A helical membrane pass occupies residues 44-64 (VDGGFPLLKVAVLLLLSYVLL). At 65–535 (RCRHAVRQRF…RTQGFLEGEP (471 aa)) the chain is on the cytoplasmic side. Serine 139 is modified (phosphoserine).

The protein belongs to the ITPRIP family.

It localises to the membrane. The chain is Inositol 1,4,5-trisphosphate receptor-interacting protein-like 2 (ITPRIPL2) from Homo sapiens (Human).